The sequence spans 3903 residues: Centrin-binding protein SFI1 (3903 aa).

N-linked (GlcNAc...) asparagine glycans are attached at residues Asn159 and Asn1728.

Interacts with CEN1.

Its subcellular location is the cytoplasm. The protein localises to the cytoskeleton. It is found in the microtubule organizing center. The protein resides in the centrosome. Part of the centrosome outer core complex. Plays a role in the initiation and assembly of daughter buds. This is Centrin-binding protein SFI1 from Toxoplasma gondii (strain ATCC 50611 / Me49).